A 332-amino-acid chain; its full sequence is Formamidase (332 aa).

The CN hydrolase domain maps to 14-259 (FLTALIQYPV…WEIVTAEVYP (246 aa)). The active-site Proton acceptor is the glutamate 60. Residue lysine 132 is the Proton donor of the active site. Cysteine 165 serves as the catalytic Nucleophile.

Belongs to the carbon-nitrogen hydrolase superfamily. Aliphatic amidase family.

The enzyme catalyses formamide + H2O = formate + NH4(+). Is an aliphatic amidase with a restricted substrate specificity, as it only hydrolyzes formamide. The chain is Formamidase from Bacillus cereus (strain B4264).